We begin with the raw amino-acid sequence, 507 residues long: Alkyl hydroperoxide reductase subunit F (507 aa).

207–222 (DVLIVGGGPASGSAAI) contributes to the FAD binding site. A disulfide bridge connects residues C335 and C338. Residue 347-361 (DVAVIGGGNSGVEAA) participates in NAD(+) binding. FAD is bound at residue 467–477 (TNVPGIFAAGD).

It belongs to the class-II pyridine nucleotide-disulfide oxidoreductase family. Homodimer. The cofactor is FAD.

Its function is as follows. Serves to protect the cell against DNA damage by alkyl hydroperoxides. It can use either NADH or NADPH as electron donor for direct reduction of redox dyes or of alkyl hydroperoxides when combined with the AhpC protein. This is Alkyl hydroperoxide reductase subunit F (ahpF) from Staphylococcus aureus (strain MRSA252).